A 455-amino-acid polypeptide reads, in one-letter code: Adenylosuccinate synthetase isozyme 2 (455 aa).

The interval 1 to 25 (MSDSGDAQPQDGGNSSSSRGKSPSV) is disordered. The segment covering 12-25 (GGNSSSSRGKSPSV) has biased composition (low complexity). GTP contacts are provided by residues 38-44 (GDEGKGK) and 66-68 (GHT). Residue Asp39 is the Proton acceptor of the active site. Mg(2+) contacts are provided by Asp39 and Gly66. Residue Asp39 coordinates substrate. IMP is bound by residues 39 to 42 (DEGK), 64 to 67 (NAGH), Thr161, Arg175, Asn254, Thr269, and Arg333. His67 serves as the catalytic Proton donor. 329 to 335 (VTTGRKR) provides a ligand contact to substrate. GTP contacts are provided by residues Arg335, 361-363 (KLD), and 443-446 (GVGK).

It belongs to the adenylosuccinate synthetase family. As to quaternary structure, homodimer. The cofactor is Mg(2+).

The protein localises to the cytoplasm. Its subcellular location is the mitochondrion. The enzyme catalyses IMP + L-aspartate + GTP = N(6)-(1,2-dicarboxyethyl)-AMP + GDP + phosphate + 2 H(+). Its pathway is purine metabolism; AMP biosynthesis via de novo pathway; AMP from IMP: step 1/2. Inhibited competitively by AMP and IMP and non-competitively by fructose 1,6-bisphosphate. Its function is as follows. Plays an important role in the de novo pathway and in the salvage pathway of purine nucleotide biosynthesis. Catalyzes the first committed step in the biosynthesis of AMP from IMP. This is Adenylosuccinate synthetase isozyme 2 (adss2) from Danio rerio (Zebrafish).